Reading from the N-terminus, the 228-residue chain is Uridylate kinase (228 aa).

9 to 10 (GS) provides a ligand contact to ATP. A UMP-binding site is contributed by Gly-44. Residues Gly-45 and Arg-49 each contribute to the ATP site. Residues Asp-66 and 114 to 120 (IVAAQTT) contribute to the UMP site. ATP-binding residues include Thr-140, Tyr-146, and Asp-149.

It belongs to the UMP kinase family. As to quaternary structure, homohexamer.

It is found in the cytoplasm. The enzyme catalyses UMP + ATP = UDP + ADP. Its pathway is pyrimidine metabolism; CTP biosynthesis via de novo pathway; UDP from UMP (UMPK route): step 1/1. Its activity is regulated as follows. Inhibited by UTP. Functionally, catalyzes the reversible phosphorylation of UMP to UDP. In Haloarcula marismortui (strain ATCC 43049 / DSM 3752 / JCM 8966 / VKM B-1809) (Halobacterium marismortui), this protein is Uridylate kinase.